A 1176-amino-acid polypeptide reads, in one-letter code: Surface-layer 125 kDa protein (1176 aa).

The N-terminal stretch at 1-30 (MAKQNKGRKFFAASATAALVASAIVPVASA) is a signal peptide. SLH domains follow at residues 31-88 (AQLN…LEAE), 89-152 (GDVN…DLSE), and 153-216 (FADA…PKVD).

It is found in the secreted. Its subcellular location is the cell wall. It localises to the S-layer. In terms of biological role, the S-layer is a paracrystalline mono-layered assembly of proteins which coat the surface of bacteria. In Lysinibacillus sphaericus (Bacillus sphaericus), this protein is Surface-layer 125 kDa protein.